The following is an 883-amino-acid chain: HTH-type transcriptional regulator AlkS (883 aa).

In terms of domain architecture, HTH luxR-type spans 816 to 881 (ENKAGDFLTL…QAIIEAERQG (66 aa)). Residues 840–859 (NKQIATKMYVTEDAIKWHMR) constitute a DNA-binding region (H-T-H motif).

It functions in the pathway hydrocarbon metabolism; alkane degradation. Its function is as follows. May act as a transcriptional regulator of AlkB. This chain is HTH-type transcriptional regulator AlkS (alkS), found in Pseudomonas putida (Arthrobacter siderocapsulatus).